A 394-amino-acid chain; its full sequence is GPI mannosyltransferase 2 (394 aa).

The next 9 membrane-spanning stretches (helical) occupy residues 2-22 (LWKLLRLFIIIKLIQLAIIYF), 47-67 (YYNVIITTILNKLIVWDSVYF), 104-124 (LTSILISNLCHFASVITLYYL), 132-152 (FGLVSGLLMIISPAGVFLTGN), 185-205 (SITNILGYIISGIFCAINFTV), 232-252 (IILSIITGSILFMTFLMTNIY), 293-313 (IPNFILVLPVLIFNIYSLGYM), 323-343 (LLPLIVINGLIVVGGTFFWNI), and 371-391 (YAIGYCIVWNFVQTGLFAAFL).

Belongs to the PIGV family.

Its subcellular location is the endoplasmic reticulum membrane. It functions in the pathway glycolipid biosynthesis; glycosylphosphatidylinositol-anchor biosynthesis. In terms of biological role, mannosyltransferase involved in glycosylphosphatidylinositol-anchor biosynthesis. Transfers the second mannose to the glycosylphosphatidylinositol during GPI precursor assembly. This is GPI mannosyltransferase 2 (GPI18) from Candida albicans (strain SC5314 / ATCC MYA-2876) (Yeast).